The following is a 177-amino-acid chain: Large ribosomal subunit protein uL5 (177 aa).

It belongs to the universal ribosomal protein uL5 family. Part of the 50S ribosomal subunit; part of the 5S rRNA/L5/L18/L25 subcomplex. Contacts the 5S rRNA and the P site tRNA. Forms a bridge to the 30S subunit in the 70S ribosome.

This is one of the proteins that bind and probably mediate the attachment of the 5S RNA into the large ribosomal subunit, where it forms part of the central protuberance. In the 70S ribosome it contacts protein S13 of the 30S subunit (bridge B1b), connecting the 2 subunits; this bridge is implicated in subunit movement. Contacts the P site tRNA; the 5S rRNA and some of its associated proteins might help stabilize positioning of ribosome-bound tRNAs. The protein is Large ribosomal subunit protein uL5 of Wolbachia sp. subsp. Brugia malayi (strain TRS).